Reading from the N-terminus, the 257-residue chain is UPF0246 protein YaaA (257 aa).

Belongs to the UPF0246 family.

The polypeptide is UPF0246 protein YaaA (Salmonella typhi).